The following is a 121-amino-acid chain: Large ribosomal subunit protein uL14 (121 aa).

It belongs to the universal ribosomal protein uL14 family. In terms of assembly, part of the 50S ribosomal subunit. Forms a cluster with proteins L3 and L19. In the 70S ribosome, L14 and L19 interact and together make contacts with the 16S rRNA in bridges B5 and B8.

Its function is as follows. Binds to 23S rRNA. Forms part of two intersubunit bridges in the 70S ribosome. The chain is Large ribosomal subunit protein uL14 from Azobacteroides pseudotrichonymphae genomovar. CFP2.